The sequence spans 245 residues: MPEGVAFPKEIKSFVRRAGRTTTGQAKALEDMGPQFLLPYQTSAIDFIATYADSTGARGNNDINPGPVILEIGFGMGEATAHIAALMPEKNFLCCEVHEPGVGALLKRIGEQGLRNIRIVAHDAVEVIDHMLPLQSLDGVHIFFPDPWHKKKHNKRRLIQSALIAKLAARLKVGGYIHCATDWQPYAEQILEVLSKEPLLKNTATQTHPELAGYAPKPYYRPLTKFENRGIKLGHGVWDIVFERV.

S-adenosyl-L-methionine is bound by residues glutamate 71, glutamate 96, aspartate 123, and aspartate 146. Aspartate 146 is an active-site residue. Lysine 150 serves as a coordination point for substrate. The interval 152–157 is interaction with RNA; that stretch reads KHNKRR. Substrate contacts are provided by residues aspartate 182 and 224–227; that span reads TKFE.

The protein belongs to the class I-like SAM-binding methyltransferase superfamily. TrmB family.

It catalyses the reaction guanosine(46) in tRNA + S-adenosyl-L-methionine = N(7)-methylguanosine(46) in tRNA + S-adenosyl-L-homocysteine. It participates in tRNA modification; N(7)-methylguanine-tRNA biosynthesis. Catalyzes the formation of N(7)-methylguanine at position 46 (m7G46) in tRNA. The sequence is that of tRNA (guanine-N(7)-)-methyltransferase from Albidiferax ferrireducens (strain ATCC BAA-621 / DSM 15236 / T118) (Rhodoferax ferrireducens).